The following is a 122-amino-acid chain: MTATHNHYLAVLGEDFVAQQYANEGYDITARNVSFSVGEIDIIATSPQGEVVFIEVKTRSSSLMDAAEAVTPTKMRKIHRAASKWLQGKPFADIRFDVVAVHVDEYGELDMTRYQGVEHGAC.

Belongs to the UPF0102 family.

The protein is UPF0102 protein DIP1513 of Corynebacterium diphtheriae (strain ATCC 700971 / NCTC 13129 / Biotype gravis).